Reading from the N-terminus, the 752-residue chain is Photosystem I P700 chlorophyll a apoprotein A1 (752 aa).

Helical transmembrane passes span Ile73–Ala96, Leu159–His182, Met198–Leu222, Ile294–Tyr312, Trp349–Tyr372, Leu388–Val414, Ala436–His458, and Phe533–Leu551. Residues Cys575 and Cys584 each contribute to the [4Fe-4S] cluster site. The next 2 membrane-spanning stretches (helical) occupy residues His591–Trp612 and Ser666–Phe688. Position 677 (His677) interacts with chlorophyll a'. The chlorophyll a site is built by Met685 and Tyr693. Phylloquinone is bound at residue Trp694. A helical transmembrane segment spans residues Ala726 to Ala746.

This sequence belongs to the PsaA/PsaB family. As to quaternary structure, the PsaA/B heterodimer binds the P700 chlorophyll special pair and subsequent electron acceptors. PSI consists of a core antenna complex that captures photons, and an electron transfer chain that converts photonic excitation into a charge separation. The eukaryotic PSI reaction center is composed of at least 11 subunits. The cofactor is P700 is a chlorophyll a/chlorophyll a' dimer, A0 is one or more chlorophyll a, A1 is one or both phylloquinones and FX is a shared 4Fe-4S iron-sulfur center..

It localises to the plastid. The protein localises to the chloroplast thylakoid membrane. The catalysed reaction is reduced [plastocyanin] + hnu + oxidized [2Fe-2S]-[ferredoxin] = oxidized [plastocyanin] + reduced [2Fe-2S]-[ferredoxin]. Its function is as follows. PsaA and PsaB bind P700, the primary electron donor of photosystem I (PSI), as well as the electron acceptors A0, A1 and FX. PSI is a plastocyanin/cytochrome c6-ferredoxin oxidoreductase, converting photonic excitation into a charge separation, which transfers an electron from the donor P700 chlorophyll pair to the spectroscopically characterized acceptors A0, A1, FX, FA and FB in turn. Oxidized P700 is reduced on the lumenal side of the thylakoid membrane by plastocyanin or cytochrome c6. This is Photosystem I P700 chlorophyll a apoprotein A1 from Thalassiosira pseudonana (Marine diatom).